The chain runs to 379 residues: Sialidase-2 (379 aa).

The FRIP motif signature appears at 20–23 (YRIP). Positions 21 and 41 each coordinate substrate. The Proton acceptor role is filled by D46. One copy of the BNR 1 repeat lies at 127–138 (ITSTDHGKTWSA). Substrate is bound by residues Y179 and Y181. The stretch at 197–208 (FLSHDHGSTWEL) is one BNR 2 repeat. The substrate site is built by E218, R237, and R303. The active-site Nucleophile is the Y333. E354 is a catalytic residue.

Belongs to the glycosyl hydrolase 33 family.

Its subcellular location is the cytoplasm. The enzyme catalyses Hydrolysis of alpha-(2-&gt;3)-, alpha-(2-&gt;6)-, alpha-(2-&gt;8)- glycosidic linkages of terminal sialic acid residues in oligosaccharides, glycoproteins, glycolipids, colominic acid and synthetic substrates.. Functionally, catalyzes the removal of sialic acid (N-acetylneuraminic acid) moieties from glycoproteins, oligosaccharides and gangliosides. This chain is Sialidase-2 (NEU2), found in Cricetulus griseus (Chinese hamster).